The sequence spans 200 residues: Holliday junction branch migration complex subunit RuvA (200 aa).

The interval 1–63 is domain I; sequence MYAYVKGKLT…EDAQLLYGFS (63 aa). Residues 64 to 142 are domain II; that stretch reads SEEEKDMFLS…ITEEDSDSLL (79 aa). Residues 143–149 are flexible linker; the sequence is QVDATST. Positions 150–200 are domain III; sequence VQDQFVQEAMLALEALGYSKRELAKVEKTLNKNKYDSVDEAVKAGLQLVVS.

This sequence belongs to the RuvA family. Homotetramer. Forms an RuvA(8)-RuvB(12)-Holliday junction (HJ) complex. HJ DNA is sandwiched between 2 RuvA tetramers; dsDNA enters through RuvA and exits via RuvB. An RuvB hexamer assembles on each DNA strand where it exits the tetramer. Each RuvB hexamer is contacted by two RuvA subunits (via domain III) on 2 adjacent RuvB subunits; this complex drives branch migration. In the full resolvosome a probable DNA-RuvA(4)-RuvB(12)-RuvC(2) complex forms which resolves the HJ.

Its subcellular location is the cytoplasm. Functionally, the RuvA-RuvB-RuvC complex processes Holliday junction (HJ) DNA during genetic recombination and DNA repair, while the RuvA-RuvB complex plays an important role in the rescue of blocked DNA replication forks via replication fork reversal (RFR). RuvA specifically binds to HJ cruciform DNA, conferring on it an open structure. The RuvB hexamer acts as an ATP-dependent pump, pulling dsDNA into and through the RuvAB complex. HJ branch migration allows RuvC to scan DNA until it finds its consensus sequence, where it cleaves and resolves the cruciform DNA. The protein is Holliday junction branch migration complex subunit RuvA of Staphylococcus aureus (strain Mu3 / ATCC 700698).